We begin with the raw amino-acid sequence, 347 residues long: Microtubule-associated protein Jupiter (347 aa).

Polar residues predominate over residues 1–14 (MISNFDCTDNQASS). Residues 1–33 (MISNFDCTDNQASSKVLRPPGGGSSDIFGSEMP) form a disordered region. A Phosphoserine modification is found at Ser24. Phosphothreonine is present on residues Thr35 and Thr96. 3 positions are modified to phosphoserine: Ser105, Ser134, and Ser145. Disordered stretches follow at residues 127 to 193 (HYNG…PTPP) and 303 to 347 (GNPV…SGLW). Low complexity predominate over residues 132–145 (SGSVSSASSSVSSS). The segment covering 146 to 164 (TENLKMNSGSRSVFRNMST) has biased composition (polar residues). Residues 181–193 (PPSPVPIEVPTPP) are compositionally biased toward pro residues.

This sequence belongs to the MAP Jupiter family.

It is found in the nucleus. The protein resides in the cytoplasm. Its subcellular location is the cytoskeleton. The protein localises to the spindle. In terms of biological role, binds to all microtubule populations. This Drosophila yakuba (Fruit fly) protein is Microtubule-associated protein Jupiter.